Reading from the N-terminus, the 82-residue chain is Small ribosomal subunit protein uS17 (82 aa).

This sequence belongs to the universal ribosomal protein uS17 family. Part of the 30S ribosomal subunit.

In terms of biological role, one of the primary rRNA binding proteins, it binds specifically to the 5'-end of 16S ribosomal RNA. This is Small ribosomal subunit protein uS17 from Nitrobacter hamburgensis (strain DSM 10229 / NCIMB 13809 / X14).